The primary structure comprises 311 residues: Cilia-and flagella-associated protein 96 (311 aa).

This sequence belongs to the CFAP96 family.

Its subcellular location is the cytoplasm. It is found in the cytoskeleton. The protein localises to the microtubule organizing center. The protein resides in the centrosome. In Danio rerio (Zebrafish), this protein is Cilia-and flagella-associated protein 96 (cfap96).